The sequence spans 518 residues: MMSFLPYFSAETWTLLALLITLIVVYGYWPYGVFTKMGIPGPKPLPYFGTMLEYKKGFTNFDTECFQKYGRIWGIYDGRQPVLCIMDKSMIKTVLIKECYNIFTNRRNFHLNGELFDALSVAEDDTWRRIRSVLSPSFTSGRLKEMFGIMKQHSSTLLSGMKKQADKDQTIEVKEFFGPYSMDVVTSTAFSVDIDSLNNPSDPFVSNVKKMLKFDLFNPLFLLVALFPFTGPILEKMKFSFFPTAVTDFFYASLAKIKSGRDTGNSTNRVDFLQLMIDSQKGSDTKTGEEQTKGLTDHEILSQAMIFIFAGYETSSSTMSFLAYNLATNHHVMTKLQEEIDTVFPNKAPIQYEALMQMDYLDCVLNESLRLYPIAPRLERVAKKTVEINGIVIPKDCIVLVPTWTLHRDPEIWSDPEEFKPERFSKENKESIDPYTYMPFGAGPRNCIGMRFALIMIKLAMVEILQSFTFSVCDETEIPLEMDNQGLLMPKRPIKLRLEARRNTPSNTTATTLKSPTT.

Residue Cys-447 participates in heme binding.

It belongs to the cytochrome P450 family. Heme is required as a cofactor.

It localises to the endoplasmic reticulum membrane. The protein localises to the microsome membrane. The catalysed reaction is an organic molecule + reduced [NADPH--hemoprotein reductase] + O2 = an alcohol + oxidized [NADPH--hemoprotein reductase] + H2O + H(+). Cytochromes P450 are a group of heme-thiolate monooxygenases. In liver microsomes, this enzyme is involved in an NADPH-dependent electron transport pathway. It oxidizes a variety of structurally unrelated compounds, including steroids, fatty acids, and xenobiotics. The polypeptide is Cytochrome P450 3A27 (cyp3a27) (Oncorhynchus mykiss (Rainbow trout)).